The following is a 432-amino-acid chain: MPEYVNWLRHASPYINAHRDCTFVVMLPGDGVEHPNFGNIVHDIVLLHSLGVRLVLVHGSRPQIETRLAARGLTPHYHHGMRITDAATLECVIDAVGQLRIAIEARLSMDMASSPMQGSRLRVASGNLVTARPIGVLEGVDYHHTGEVRRVDRKGINRLLDERSIVLLSPLGYSPTGEIFNLACEDVATRAAIDLGADKLLLFGADLGLIDENGKLVRELRPQQVPAHLQRLGSNYQAELLDAAAEACRGGVARSHIVSYAEDGALLTELFTRDGGGTLVAQEQFELVREAAIEDVGGLLDLISPLEEQGILVRRSREVLEREIEQFSVVEREGMIIACAALYQIADSDAGELACLAVNPEYRHGGRGDELLERIETRARAQGLKTLFVLTTRTAHWFRERGFEPSSVERLPAARASLYNYQRNSKIFEKSL.

One can recognise an N-acetyltransferase domain in the interval 286-425 (ELVREAAIED…ASLYNYQRNS (140 aa)).

Belongs to the acetyltransferase family. ArgA subfamily.

The protein resides in the cytoplasm. It carries out the reaction L-glutamate + acetyl-CoA = N-acetyl-L-glutamate + CoA + H(+). It participates in amino-acid biosynthesis; L-arginine biosynthesis; N(2)-acetyl-L-ornithine from L-glutamate: step 1/4. The polypeptide is Amino-acid acetyltransferase (Pseudomonas fluorescens (strain Pf0-1)).